A 324-amino-acid polypeptide reads, in one-letter code: Beta-ketoacyl-[acyl-carrier-protein] synthase III (324 aa).

Active-site residues include C111 and H251. The tract at residues 252–256 (QANTR) is ACP-binding. The active site involves N281.

Belongs to the thiolase-like superfamily. FabH family. In terms of assembly, homodimer.

It localises to the plastid. Its subcellular location is the chloroplast. It catalyses the reaction malonyl-[ACP] + acetyl-CoA + H(+) = 3-oxobutanoyl-[ACP] + CO2 + CoA. It participates in lipid metabolism; fatty acid biosynthesis. Functionally, catalyzes the condensation reaction of fatty acid synthesis by the addition to an acyl acceptor of two carbons from malonyl-ACP. Catalyzes the first condensation reaction which initiates fatty acid synthesis and may therefore play a role in governing the total rate of fatty acid production. Possesses both acetoacetyl-ACP synthase and acetyl transacylase activities. Its substrate specificity determines the biosynthesis of branched-chain and/or straight-chain of fatty acids. This Pyropia yezoensis (Susabi-nori) protein is Beta-ketoacyl-[acyl-carrier-protein] synthase III.